Here is a 381-residue protein sequence, read N- to C-terminus: Cytochrome b (381 aa).

4 helical membrane-spanning segments follow: residues 34–54 (FGSLLGLCLIIQILTGLFLAM), 78–99 (WLIRNIHANGASLFFICIYLHI), 114–134 (WNIGVILLFLLMATAFVGYVL), and 179–199 (FFAFHFLLPFLILALTIIHLL). Heme b is bound by residues His84 and His98. The heme b site is built by His183 and His197. His202 is an a ubiquinone binding site. 4 helical membrane passes run 227-247 (YKDILGFFAMIFFLAVLTLFI), 289-309 (LGGVLALLFSILILMLVPLLQ), 321-341 (MTQILFWFLVANSIILTWIGG), and 348-368 (FIMVGQIASISYFSMFLIIIP).

The protein belongs to the cytochrome b family. As to quaternary structure, the cytochrome bc1 complex contains 3 respiratory subunits (MT-CYB, CYC1 and UQCRFS1), 2 core proteins (UQCRC1 and UQCRC2) and probably 6 low-molecular weight proteins. Requires heme b as cofactor.

The protein resides in the mitochondrion inner membrane. Functionally, component of the ubiquinol-cytochrome c reductase complex (complex III or cytochrome b-c1 complex) that is part of the mitochondrial respiratory chain. The b-c1 complex mediates electron transfer from ubiquinol to cytochrome c. Contributes to the generation of a proton gradient across the mitochondrial membrane that is then used for ATP synthesis. The polypeptide is Cytochrome b (mt-cyb) (Galeocerdo cuvier (Tiger shark)).